Reading from the N-terminus, the 492-residue chain is GTPase Obg (492 aa).

In terms of domain architecture, Obg spans 2-159 (PRFVDRVVIH…RELTLELKTV (158 aa)). The OBG-type G domain occupies 160-340 (ADVGLIGFPS…LIFGLWQMIS (181 aa)). GTP is bound by residues 166–173 (GFPSAGKS), 191–195 (FTTLV), 212–215 (DVPG), 292–295 (NKID), and 321–323 (STV). Residues serine 173 and threonine 193 each contribute to the Mg(2+) site. Residues 358 to 438 (PVPVDDSGFR…IGDMTFDWEP (81 aa)) enclose the OCT domain. The segment at 441–492 (PAGQQVVLSGRGTDARLERTERVGAAERKAARRQRRTGDDAERGTTERGENT) is disordered. Basic and acidic residues-rich tracts occupy residues 453–469 (TDARLERTERVGAAERK) and 476–492 (RTGDDAERGTTERGENT).

It belongs to the TRAFAC class OBG-HflX-like GTPase superfamily. OBG GTPase family. Monomer. It depends on Mg(2+) as a cofactor.

The protein resides in the cytoplasm. Its function is as follows. An essential GTPase which binds GTP, GDP and possibly (p)ppGpp with moderate affinity, with high nucleotide exchange rates and a fairly low GTP hydrolysis rate. Plays a role in control of the cell cycle, stress response, ribosome biogenesis and in those bacteria that undergo differentiation, in morphogenesis control. This chain is GTPase Obg, found in Mycolicibacterium paratuberculosis (strain ATCC BAA-968 / K-10) (Mycobacterium paratuberculosis).